Reading from the N-terminus, the 606-residue chain is Elongation factor 4 (606 aa).

Residues 11-193 form the tr-type G domain; it reads DKIRNFSIVA…AIVTRLPPPK (183 aa). GTP contacts are provided by residues 23 to 28 and 140 to 143; these read DHGKST and NKVD.

It belongs to the TRAFAC class translation factor GTPase superfamily. Classic translation factor GTPase family. LepA subfamily.

The protein resides in the cell inner membrane. The enzyme catalyses GTP + H2O = GDP + phosphate + H(+). Its function is as follows. Required for accurate and efficient protein synthesis under certain stress conditions. May act as a fidelity factor of the translation reaction, by catalyzing a one-codon backward translocation of tRNAs on improperly translocated ribosomes. Back-translocation proceeds from a post-translocation (POST) complex to a pre-translocation (PRE) complex, thus giving elongation factor G a second chance to translocate the tRNAs correctly. Binds to ribosomes in a GTP-dependent manner. This is Elongation factor 4 from Caulobacter vibrioides (strain ATCC 19089 / CIP 103742 / CB 15) (Caulobacter crescentus).